Consider the following 249-residue polypeptide: Ribosomal RNA small subunit methyltransferase J (249 aa).

S-adenosyl-L-methionine-binding positions include 99–100, 115–116, 151–152, and Asp-169; these read RD, ER, and SS.

It belongs to the methyltransferase superfamily. RsmJ family.

Its subcellular location is the cytoplasm. The catalysed reaction is guanosine(1516) in 16S rRNA + S-adenosyl-L-methionine = N(2)-methylguanosine(1516) in 16S rRNA + S-adenosyl-L-homocysteine + H(+). Specifically methylates the guanosine in position 1516 of 16S rRNA. The sequence is that of Ribosomal RNA small subunit methyltransferase J from Shewanella oneidensis (strain ATCC 700550 / JCM 31522 / CIP 106686 / LMG 19005 / NCIMB 14063 / MR-1).